The following is a 590-amino-acid chain: Protein OS-9 homolog (590 aa).

The first 19 residues, 1-19, serve as a signal peptide directing secretion; the sequence is MRRPSLALLALSSLPFGSA. The interval 83–106 is disordered; it reads SAIRESATANADTDNGDESIGGTS. Asn136 carries N-linked (GlcNAc...) asparagine glycosylation. The region spanning 167–312 is the MRH domain; the sequence is NQCLHFVSGW…VIHTPRLCAD (146 aa). Cys169 and Cys182 are disulfide-bonded. 3 residues coordinate a mannooligosaccharide derivative: Trp176, Trp177, and Gln189. The disordered stretch occupies residues 198-248; that stretch reads GGPPLRDKNSQEYILGTSLPPSSHSQKGKQIEVPNNEQKQLSPPPNTELQA. 2 disulfides stabilise this stretch: Cys265/Cys298 and Cys280/Cys310. A mannooligosaccharide derivative-binding residues include Asp266, Arg272, Glu294, and Tyr300. 3 disordered regions span residues 357 to 376, 436 to 472, and 545 to 590; these read AAVT…PEKL, GDDN…MKKM, and YEDE…RDEL. Over residues 446–455 the composition is skewed to basic residues; it reads HHPKAGKGRK. Composition is skewed to basic and acidic residues over residues 556-568 and 579-590; these read EAGK…KKGG and EGSKEEYYRDEL. Residues 587-590 carry the Prevents secretion from ER motif; the sequence is RDEL.

Belongs to the OS-9 family. In terms of assembly, interacts with missfolded ER lumenal proteins.

The protein localises to the endoplasmic reticulum membrane. Its function is as follows. Lectin involved in the quality control of the secretory pathway. As a member of the endoplasmic reticulum-associated degradation lumenal (ERAD-L) surveillance system, targets misfolded endoplasmic reticulum lumenal glycoproteins for degradation. The sequence is that of Protein OS-9 homolog (yos-9) from Neurospora crassa (strain ATCC 24698 / 74-OR23-1A / CBS 708.71 / DSM 1257 / FGSC 987).